A 265-amino-acid polypeptide reads, in one-letter code: U6 snRNA phosphodiesterase 1 (265 aa).

The disordered stretch occupies residues 1–67 (MSAAPLVGYS…EGPVDDSAKH (67 aa)). The segment covering 20–32 (AGARVRPGAEGRS) has biased composition (basic and acidic residues). His120 (proton acceptor) is an active-site residue. Position 120 to 122 (120 to 122 (HLS)) interacts with AMP. UMP-binding positions include Gln164, Tyr202, and 206-210 (SFHIS). Residues Tyr202 and 204–210 (DPSFHIS) contribute to the AMP site. The active-site Proton donor is His208.

This sequence belongs to the 2H phosphoesterase superfamily. USB1 family. In terms of assembly, interacts with PLRG1, CDC5L and PRPF19.

It is found in the nucleus. It carries out the reaction a 3'-end uridylyl-uridine-RNA = a 3'-end 2',3'-cyclophospho-uridine-RNA + uridine. The catalysed reaction is a 3'-end uridylyl-adenosine-RNA = a 3'-end 2',3'-cyclophospho-uridine-RNA + adenosine. In terms of biological role, 3'-5' RNA exonuclease that trims the 3' end of oligo(U) and oligo(A) tracts of the pre-U6 small nuclear RNA (snRNA) molecule, leading to the formation of a mature U6 snRNA 3' end-terminated with a 2',3'-cyclic phosphate. Participates in the U6 snRNA 3' end processing that prevents U6 snRNA degradation. In addition also removes uridines from the 3' end of U6atac snRNA and possibly the vault RNA VTRNA1-1. This Bos taurus (Bovine) protein is U6 snRNA phosphodiesterase 1.